Reading from the N-terminus, the 157-residue chain is Ribosome maturation factor RimP (157 aa).

It belongs to the RimP family.

The protein resides in the cytoplasm. Required for maturation of 30S ribosomal subunits. This Streptococcus thermophilus (strain ATCC BAA-491 / LMD-9) protein is Ribosome maturation factor RimP.